The sequence spans 335 residues: UDP-N-acetylglucosamine--N-acetylmuramyl-(pentapeptide) pyrophosphoryl-undecaprenol N-acetylglucosamine transferase (335 aa).

UDP-N-acetyl-alpha-D-glucosamine-binding positions include 9–11 (TGG), Asn123, Ser176, and Gln274.

The protein belongs to the glycosyltransferase 28 family. MurG subfamily.

The protein resides in the cell inner membrane. The enzyme catalyses di-trans,octa-cis-undecaprenyl diphospho-N-acetyl-alpha-D-muramoyl-L-alanyl-D-glutamyl-meso-2,6-diaminopimeloyl-D-alanyl-D-alanine + UDP-N-acetyl-alpha-D-glucosamine = di-trans,octa-cis-undecaprenyl diphospho-[N-acetyl-alpha-D-glucosaminyl-(1-&gt;4)]-N-acetyl-alpha-D-muramoyl-L-alanyl-D-glutamyl-meso-2,6-diaminopimeloyl-D-alanyl-D-alanine + UDP + H(+). Its pathway is cell wall biogenesis; peptidoglycan biosynthesis. Its function is as follows. Cell wall formation. Catalyzes the transfer of a GlcNAc subunit on undecaprenyl-pyrophosphoryl-MurNAc-pentapeptide (lipid intermediate I) to form undecaprenyl-pyrophosphoryl-MurNAc-(pentapeptide)GlcNAc (lipid intermediate II). The polypeptide is UDP-N-acetylglucosamine--N-acetylmuramyl-(pentapeptide) pyrophosphoryl-undecaprenol N-acetylglucosamine transferase (Campylobacter fetus subsp. fetus (strain 82-40)).